The primary structure comprises 194 residues: MKKAFLVFLSVVLVTTVFLVKQQESVAQAKQLEYSGEEIFKGFVFAQGEVGKQLPEVFNKAMTDKLNTKQAKAFANQVVADIKKEDADFFDNLKKAVYSKDALKVDELLKKAGQIVEEKVEAAKEIAASKDDTSRVQAELVNTVDTANYFYYVSYVAAAGALILIILAIDITPIAISDNVDREMAIRTLVDELN.

The first 29 residues, 1-29 (MKKAFLVFLSVVLVTTVFLVKQQESVAQA), serve as a signal peptide directing secretion. Positions 104-131 (KVDELLKKAGQIVEEKVEAAKEIAASKD) form a coiled coil. Residues 149–171 (YFYYVSYVAAAGALILIILAIDI) traverse the membrane as a helical segment.

The protein localises to the membrane. This is an uncharacterized protein from Bacillus subtilis (strain 168).